The chain runs to 894 residues: MILLAVLFLCFISSYSASVKGHTTGLSLNNDRLYKLTYSTEVLLDRGKGKLQDSVGYRISSNVDVALLWRNPDGDDDQLIQITMKDVNVENVNQQRGEKSIFKGKSPSKIMGKENLEALQRPTLLHLIHGKVKEFYSYQNEAVAIENIKRGLASLFQTQLSSGTTNEVDISGNCKVTYQAHQDKVIKIKALDSCKIARSGFTTPNQVLGVSSKATSVTTYKIEDSFVIAVLAEETHNFGLNFLQTIKGKIVSKQKLELKTTEAGPRLMSGKQAAAIIKAVDSKYTAIPIVGQVFQSHCKGCPSLSELWRSTRKYLQPDNLSKAEAVRNFLAFIQHLRTAKKEEILQILKMENKEVLPQLVDAVTSAQTSDSLEAILDFLDFKSDSSIILQERFLYACGFASHPNEELLRALISKFKGSIGSSDIRETVMIITGTLVRKLCQNEGCKLKAVVEAKKLILGGLEKAEKKEDTRMYLLALKNALLPEGIPSLLKYAEAGEGPISHLATTALQRYDLPFITDEVKKTLNRIYHQNRKVHEKTVRTAAAAIILNNNPSYMDVKNILLSIGELPQEMNKYMLAIVQDILRFEMPASKIVRRVLKEMVAHNYDRFSRSGSSSAYTGYIERSPRSASTYSLDILYSGSGILRRSNLNIFQYIGKAGLHGSQVVIEAQGLEALIAATPDEGEENLDSYAGMSAILFDVQLRPVTFFNGYSDLMSKMLSASGDPISVVKGLILLIDHSQELQLQSGLKANIEVQGGLAIDISGAMEFSLWYRESKTRVKNRVTVVITTDITVDSSFVKAGLETSTETEAGLEFISTVQFSQYPFLVCMQMDKDEAPFRQFEKKYERLSTGRGYVSQKRKESVLAGCEFPLHQENSEMCKVVFAPQPDSTSSGWF.

The N-terminal stretch at 1-18 is a signal peptide; it reads MILLAVLFLCFISSYSAS. The region spanning 28-659 is the Vitellogenin domain; sequence LNNDRLYKLT…IFQYIGKAGL (632 aa). C174 and C194 form a disulfide bridge.

As to quaternary structure, heterodimer; heterodimerizes with the protein disulfide isomerase (P4HB/PDI). Interacts with APOB. Interacts with PRAP1. Liver and small intestine. Also found in ovary, testis and kidney.

Its subcellular location is the endoplasmic reticulum. The protein resides in the golgi apparatus. It carries out the reaction a 1,2-diacyl-sn-glycero-3-phosphocholine(in) = a 1,2-diacyl-sn-glycero-3-phosphocholine(out). The enzyme catalyses a 1,2-diacyl-sn-glycero-3-phosphoethanolamine(in) = a 1,2-diacyl-sn-glycero-3-phosphoethanolamine(out). The catalysed reaction is a cholesterol ester(in) = a cholesterol ester(out). It catalyses the reaction a triacyl-sn-glycerol(in) = a triacyl-sn-glycerol(out). In terms of biological role, catalyzes the transport of triglyceride, cholesteryl ester, and phospholipid between phospholipid surfaces. Required for the assembly and secretion of plasma lipoproteins that contain apolipoprotein B. May be involved in regulating cholesteryl ester biosynthesis in cells that produce lipoproteins. This is Microsomal triglyceride transfer protein large subunit (MTTP) from Homo sapiens (Human).